A 2799-amino-acid chain; its full sequence is E3 ubiquitin-protein ligase UBR5 (2799 aa).

Residue T2 is modified to N-acetylthreonine. Over residues 77–88 the composition is skewed to basic and acidic residues; the sequence is DRLELGKPDNND. The disordered stretch occupies residues 77–175; it reads DRLELGKPDN…DRGSGLLGSQ (99 aa). The span at 89-110 shows a compositional bias: polar residues; that stretch reads GSKLNSNSGAGRTSRPGRTSDS. S110 bears the Phosphoserine mark. Over residues 135-144 the composition is skewed to gly residues; the sequence is GVGGSGGGSS. Residues 184-226 enclose the UBA domain; sequence VIPEELISQAQVVLQGKSRSVIIRELQRTNLDVNLAVNNLLSR. At S327 the chain carries Phosphoserine. A compositionally biased stretch (basic and acidic residues) spans 328-347; that stretch reads FDNERGSTSKEGEPNLDKKN. Residues 328-352 form a disordered region; that stretch reads FDNERGSTSKEGEPNLDKKNTPVQS. Phosphoserine occurs at positions 352 and 578. The tract at residues 579-648 is disordered; sequence PESLKNMEKA…APKEEEKVNE (70 aa). The segment covering 583 to 604 has biased composition (basic and acidic residues); it reads KNMEKASKTTEAKPESKQEPVK. S612 bears the Phosphoserine mark. Positions 614–628 are enriched in low complexity; that stretch reads ASTCSDASSIASSAS. T637 carries the phosphothreonine modification. A phosphoserine mark is found at S808, S928, and S1018. Disordered regions lie at residues 999-1031 and 1052-1075; these read AGLG…PDPP and TAAT…EPSV. Residues 1017–1031 are compositionally biased toward pro residues; sequence VSPPIAPPSWVPDPP. The span at 1052 to 1073 shows a compositional bias: polar residues; that stretch reads TAATGTGQGPSTSTIPGPSTEP. Phosphothreonine occurs at positions 1115 and 1135. The UBR-type zinc finger occupies 1177-1245; it reads DTCSFTWTGA…EKCKCKTLIA (69 aa). Positions 1179, 1196, 1199, 1208, 1211, 1215, 1216, and 1219 each coordinate Zn(2+). The residue at position 1227 (S1227) is a Phosphoserine. The Zn(2+) site is built by C1232, C1234, and C1240. The tract at residues 1299 to 1318 is disordered; sequence REDRNRKTASPEDSDMPDHD. Phosphoserine is present on residues S1308, S1355, S1375, and S1481. The disordered stretch occupies residues 1515 to 1740; it reads SVEPLPPRPS…PSSTSTPAAS (226 aa). Residues 1524–1537 show a composition bias toward low complexity; it reads SSDQSSSSSQSQSS. Residues 1538–1553 are compositionally biased toward polar residues; that stretch reads YIIRNPQQRRISQSQP. The residue at position 1549 (S1549) is a Phosphoserine. Acidic residues-rich tracts occupy residues 1559–1574 and 1605–1614; these read EEQD…EVEV and HDEDGSDMEL. Residues 1629–1638 are compositionally biased toward polar residues; sequence NHSNQDNASG. 3 stretches are compositionally biased toward low complexity: residues 1641 to 1657, 1668 to 1681, and 1726 to 1740; these read SVVT…ASSV, SNDS…SSQS, and AAST…PAAS. T1736 carries the post-translational modification Phosphothreonine. S1741 carries the phosphoserine modification. Position 1746 is a phosphotyrosine (Y1746). A Phosphoserine modification is found at S1780. Positions 1859 to 1890 are disordered; the sequence is LASAGDPGHPNHPLHASQNSARRERMTAREEA. The span at 1879–1890 shows a compositional bias: basic and acidic residues; that stretch reads ARRERMTAREEA. The residue at position 1969 (T1969) is a Phosphothreonine. The disordered stretch occupies residues 1984–2021; sequence GIDNEDSEHENDDDTNQSATLNDKDDDSLPAETGQNHP. Over residues 1985–1998 the composition is skewed to acidic residues; the sequence is IDNEDSEHENDDDT. Phosphoserine is present on residues S1990, S2026, and S2028. Residue T2030 is modified to Phosphothreonine. S2076 bears the Phosphoserine mark. The disordered stretch occupies residues 2117 to 2142; the sequence is RQKKEGEEQPVLPEETESSKPGPSAH. T2213 bears the Phosphothreonine mark. 2 positions are modified to phosphoserine: S2241 and S2289. The segment at 2323–2392 is disordered; that stretch reads HTSLMQRLRN…PSDDPEPLPA (70 aa). Composition is skewed to basic and acidic residues over residues 2332-2348 and 2356-2368; these read NRGE…EMRR and SRRD…RRQL. In terms of domain architecture, PABC spans 2377 to 2454; it reads PASEGNPSDD…AMELIIAHGR (78 aa). The region spanning 2462-2799 is the HECT domain; that stretch reads LDLGLVDSSE…AIKTKNFGFV (338 aa). S2469, S2484, and S2486 each carry phosphoserine. The interval 2473–2493 is disordered; sequence VQQENRKRHGSSRSVVDMDLD. The Glycyl thioester intermediate role is filled by C2768.

The protein belongs to the UBR5 family. As to quaternary structure, homotetramer; composed of a dimer of dimers. Associates with CDK9 and TFIIS/TCEA1 and forms a transcription regulatory complex made of CDK9, RNAP II, UBR5 and TFIIS/TCEA1 that can stimulate target gene transcription (e.g. gamma fibrinogen/FGG) by recruiting their promoters. Associates with the E3 ligase complex containing DYRK2, EDD/UBR5, DDB1 and DCAF1 proteins (EDVP complex). Binds TOPBP1. Interacts with PIH1D1. Interacts with CIB1. (Microbial infection) Interacts with human T-cell leukemia virus 1/HTLV-1 protein HBZ; this interaction modulates HBZ stability. Widely expressed. Most abundant in testis and expressed at high levels in brain, pituitary and kidney.

It localises to the nucleus. It is found in the cytoplasm. The enzyme catalyses S-ubiquitinyl-[E2 ubiquitin-conjugating enzyme]-L-cysteine + [acceptor protein]-L-lysine = [E2 ubiquitin-conjugating enzyme]-L-cysteine + N(6)-ubiquitinyl-[acceptor protein]-L-lysine.. The protein operates within protein modification; protein ubiquitination. E3 ubiquitin-protein ligase involved in different protein quality control pathways in the cytoplasm and nucleus. Mainly acts as a ubiquitin chain elongator that extends pre-ubiquitinated substrates. Component of the N-end rule pathway: ubiquitinates proteins bearing specific N-terminal residues that are destabilizing according to the N-end rule, leading to their degradation. Recognizes type-1 N-degrons, containing positively charged amino acids (Arg, Lys and His). Together with UBR4, part of a cytoplasm protein quality control pathway that prevents protein aggregation by catalyzing assembly of heterotypic 'Lys-11'-/'Lys-48'-linked branched ubiquitin chains on aggregated proteins, leading to substrate recognition by the segregase p97/VCP and degradation by the proteasome: UBR5 is probably branching multiple 'Lys-48'-linked chains of substrates initially modified with mixed conjugates by UBR4. Together with ITCH, catalyzes 'Lys-48'-/'Lys-63'-branched ubiquitination of TXNIP, leading to its degradation: UBR5 mediates branching of 'Lys-48'-linked chains of substrates initially modified with 'Lys-63'-linked conjugates by ITCH. Catalytic component of a nuclear protein quality control pathway that mediates ubiquitination and degradation of unpaired transcription factors (i.e. transcription factors that are not assembled into functional multiprotein complexes): specifically recognizes and binds degrons that are not accessible when transcription regulators are associated with their coactivators. Ubiquitinates various unpaired transcription regulator (MYC, SUPT4H1, SUPT5H, CDC20 and MCRS1), as well as ligand-bound nuclear receptors (ESR1, NR1H3, NR3C1, PGR, RARA, RXRA AND VDR) that are not associated with their nuclear receptor coactivators (NCOAs). Involved in maturation and/or transcriptional regulation of mRNA by mediating polyubiquitination and activation of CDK9. Also acts as a regulator of DNA damage response by acting as a suppressor of RNF168, an E3 ubiquitin-protein ligase that promotes accumulation of 'Lys-63'-linked histone H2A and H2AX at DNA damage sites, thereby acting as a guard against excessive spreading of ubiquitinated chromatin at damaged chromosomes. Regulates DNA topoisomerase II binding protein (TopBP1) in the DNA damage response. Ubiquitinates acetylated PCK1. Acts as a positive regulator of the canonical Wnt signaling pathway by mediating (1) ubiquitination and stabilization of CTNNB1, and (2) 'Lys-48'-linked ubiquitination and degradation of TLE3. Promotes disassembly of the mitotic checkpoint complex (MCC) from the APC/C complex by catalyzing ubiquitination of BUB1B, BUB3 and CDC20. Plays an essential role in extraembryonic development. Required for the maintenance of skeletal tissue homeostasis by acting as an inhibitor of hedgehog (HH) signaling. This is E3 ubiquitin-protein ligase UBR5 (UBR5) from Homo sapiens (Human).